Consider the following 209-residue polypeptide: uncharacterized protein (209 aa).

The next 4 membrane-spanning stretches (helical) occupy residues leucine 21–leucine 41, isoleucine 81–alanine 101, valine 107–phenylalanine 127, and alanine 159–phenylalanine 179.

The protein resides in the cell membrane. This is an uncharacterized protein from Bacillus subtilis (strain 168).